The following is a 74-amino-acid chain: NAD(P)H-quinone oxidoreductase subunit O (74 aa).

Belongs to the complex I NdhO subunit family. NDH-1 can be composed of about 15 different subunits; different subcomplexes with different compositions have been identified which probably have different functions.

The protein localises to the cellular thylakoid membrane. It catalyses the reaction a plastoquinone + NADH + (n+1) H(+)(in) = a plastoquinol + NAD(+) + n H(+)(out). The enzyme catalyses a plastoquinone + NADPH + (n+1) H(+)(in) = a plastoquinol + NADP(+) + n H(+)(out). Its function is as follows. NDH-1 shuttles electrons from an unknown electron donor, via FMN and iron-sulfur (Fe-S) centers, to quinones in the respiratory and/or the photosynthetic chain. The immediate electron acceptor for the enzyme in this species is believed to be plastoquinone. Couples the redox reaction to proton translocation, and thus conserves the redox energy in a proton gradient. Cyanobacterial NDH-1 also plays a role in inorganic carbon-concentration. The polypeptide is NAD(P)H-quinone oxidoreductase subunit O (Synechococcus sp. (strain RCC307)).